Reading from the N-terminus, the 733-residue chain is Lanosterol synthase (733 aa).

Thr-2 carries the post-translational modification N-acetylthreonine. A PFTB 1 repeat occupies 125 to 166 (REEMVRYLRSVQLPDGGWGLHIEDKSTVFGTALNYVALRILG). Asp-456 functions as the Proton donor in the catalytic mechanism. 3 PFTB repeats span residues 484–529 (LCDA…MIDY), 561–601 (LNQG…ACMG), and 613–654 (VAQA…HSTC).

This sequence belongs to the terpene cyclase/mutase family. In terms of assembly, monomer.

It localises to the endoplasmic reticulum membrane. It carries out the reaction (S)-2,3-epoxysqualene = lanosterol. It participates in terpene metabolism; lanosterol biosynthesis; lanosterol from farnesyl diphosphate: step 3/3. In terms of biological role, key enzyme in the cholesterol biosynthesis pathway. Catalyzes the cyclization of (S)-2,3 oxidosqualene to lanosterol, a reaction that forms the sterol nucleus. Through the production of lanosterol may regulate lens protein aggregation and increase transparency. The chain is Lanosterol synthase from Mus musculus (Mouse).